The sequence spans 98 residues: R.appendiculatus Kunitz/BPTI-like protein (98 aa).

Residues 1–23 (MASTLKLFMLLPVILLLLQEAYG) form the signal peptide. Disulfide bonds link Cys-36–Cys-51, Cys-43–Cys-83, Cys-49–Cys-96, and Cys-74–Cys-92.

As to quaternary structure, monomer. In terms of tissue distribution, expressed in salivary glands.

It localises to the secreted. In terms of biological role, activates large conductance calcium-activated potassium channels (maxiK, KCNMA1/KCNMB), when tested at micromolar concentrations, suggesting a potential mechanism for regulating host blood supply during feeding. Shows no antiprotease activity, and does not prevent ADP-, PAF- or collagen-induced platelet aggregation. Has no effect on blood coagulation and does not inhibit the alternative or classical complement cascades. In Rhipicephalus appendiculatus (Brown ear tick), this protein is R.appendiculatus Kunitz/BPTI-like protein.